The sequence spans 95 residues: FXYD domain-containing ion transport regulator 6 (95 aa).

The signal sequence occupies residues 1 to 18 (MELVLVFLCSLLAPMVLA). At 19 to 35 (STAEKEKEMDPFHYDYQ) the chain is on the extracellular side. A helical transmembrane segment spans residues 36-58 (TLRIGGLVFAVVLFSVGILLILS). Residues 59–95 (RRCKCSFNQKPRAPGDEEAQVENLITANATEPQKAEN) lie on the Cytoplasmic side of the membrane.

Belongs to the FXYD family. In terms of assembly, regulatory subunit of the sodium/potassium-transporting ATPase which is composed of a catalytic alpha subunit, a non-catalytic beta subunit and an additional regulatory subunit. The regulatory subunit, a member of the FXYD protein family, modulates the enzymatic activity in a tissue- and isoform-specific way by changing affinities of the Na+/K+-ATPase toward Na(+), K(+) or ATP.

The protein resides in the cell membrane. Associates with and regulates the activity of the sodium/potassium-transporting ATPase (NKA) which catalyzes the hydrolysis of ATP coupled with the exchange of Na(+) and K(+) ions across the plasma membrane. Reduces the apparent affinity for intracellular Na(+) with no change in the apparent affinity for extracellular K(+). In addition to modulating NKA kinetics, may also function as a regulator of NKA localization to the plasma membrane. This chain is FXYD domain-containing ion transport regulator 6 (FXYD6), found in Macaca fascicularis (Crab-eating macaque).